We begin with the raw amino-acid sequence, 364 residues long: Chorismate synthase (364 aa).

Arginine 48 contacts NADP(+). FMN contacts are provided by residues arginine 131–serine 133, asparagine 243–alanine 244, glycine 288, lysine 303–serine 307, and arginine 329.

It belongs to the chorismate synthase family. In terms of assembly, homotetramer. The cofactor is FMNH2.

It carries out the reaction 5-O-(1-carboxyvinyl)-3-phosphoshikimate = chorismate + phosphate. It participates in metabolic intermediate biosynthesis; chorismate biosynthesis; chorismate from D-erythrose 4-phosphate and phosphoenolpyruvate: step 7/7. Functionally, catalyzes the anti-1,4-elimination of the C-3 phosphate and the C-6 proR hydrogen from 5-enolpyruvylshikimate-3-phosphate (EPSP) to yield chorismate, which is the branch point compound that serves as the starting substrate for the three terminal pathways of aromatic amino acid biosynthesis. This reaction introduces a second double bond into the aromatic ring system. The chain is Chorismate synthase from Brucella melitensis biotype 2 (strain ATCC 23457).